Here is a 398-residue protein sequence, read N- to C-terminus: Probable sugar efflux transporter (398 aa).

12 helical membrane-spanning segments follow: residues 15–35 (VVTL…PVGL), 50–70 (VGIM…PFML), 81–101 (LIGL…AWNF), 103–123 (VLVI…SITA), 136–156 (AQAL…GLPI), 169–189 (TFFA…KLLP), 209–229 (PALM…YTAY), 246–266 (FATV…VLFG), 275–295 (LLVS…MPAA), 301–321 (LAIL…GMQV), 333–353 (VAMS…ALVG), and 364–384 (AIGY…ILIF).

Belongs to the major facilitator superfamily. SotB (TC 2.A.1.2) family.

The protein resides in the cell inner membrane. In terms of biological role, involved in the efflux of sugars. The physiological role may be the reduction of the intracellular concentration of toxic sugars or sugar metabolites. The sequence is that of Probable sugar efflux transporter from Enterobacter sp. (strain 638).